Here is a 357-residue protein sequence, read N- to C-terminus: Histidinol-phosphate aminotransferase 2 (357 aa).

N6-(pyridoxal phosphate)lysine is present on lysine 216.

Belongs to the class-II pyridoxal-phosphate-dependent aminotransferase family. Histidinol-phosphate aminotransferase subfamily. Homodimer. Requires pyridoxal 5'-phosphate as cofactor.

It carries out the reaction L-histidinol phosphate + 2-oxoglutarate = 3-(imidazol-4-yl)-2-oxopropyl phosphate + L-glutamate. It participates in amino-acid biosynthesis; L-histidine biosynthesis; L-histidine from 5-phospho-alpha-D-ribose 1-diphosphate: step 7/9. The chain is Histidinol-phosphate aminotransferase 2 from Idiomarina loihiensis (strain ATCC BAA-735 / DSM 15497 / L2-TR).